The sequence spans 175 residues: Cytochrome c-type biogenesis protein CcmE (175 aa).

At 1 to 8 the chain is on the cytoplasmic side; sequence MNAVRRKK. A helical; Signal-anchor for type II membrane protein membrane pass occupies residues 9-29; the sequence is LIWVAATLAGAIIAVLLVIYA. Residues 30–175 are Periplasmic-facing; that stretch reads IGQQTDYYFD…GNHTTSTLQE (146 aa). Positions 124 and 128 each coordinate heme. A disordered region spans residues 142–175; sequence AAKGVTPTSEQFSPAIPVKQTAGEGNHTTSTLQE.

Belongs to the CcmE/CycJ family.

The protein localises to the cell inner membrane. Functionally, heme chaperone required for the biogenesis of c-type cytochromes. Transiently binds heme delivered by CcmC and transfers the heme to apo-cytochromes in a process facilitated by CcmF and CcmH. The sequence is that of Cytochrome c-type biogenesis protein CcmE from Psychrobacter sp. (strain PRwf-1).